Reading from the N-terminus, the 811-residue chain is MAWLHKLLLTMISVPLKWLVKVNSIPTDIATELGIDNTKPIIYLLRTHSVTDQFALKMSTNSLGLPKPSEPVQIGGKELPACLFLQQPRSLLTRKVKITKIADDVTRLFQLHREHPELDLQIVPVSIFWGRAPGRKLSGWSDIIANQVSPNWLRKFFIVLFLGRDNFVCYSKAVSSRTMADLKGSDEEIGHKLIRLAGTHFHRRRQNLIGPMLLERQELYNAVLGADSVRQAVSDEARSKKQSNHQIQAKAKKYVDEIAADYREGLVRIGDRLLTKIWNKVYNGIEVKHADKVRALAQNGHEIIYVPCHRSHMDYLLLTYVIYHEGLVTPHIAAGINLNFWPIGGILRKCGAFFLRRSFAGNKLYTAVFREYLELLFNKGYSVKYYPEGGRSRTGRLLPPKTGMLAMTLQGLIKGINRPVSIVPVYIGYEHVMEVSSYLKELKGTDKKKESFFQVFSAVRKLKNYGNGFLNFGDPINLSNFLDSEVPDWREAQNLEPDKKPRWLTPAVNTLANDVMGRINQAAAVSGMSLCAMCLLSAKKHAMAQDELERAIDDYLDLLKAAPYSDLSSIPELDGKALVENTLKLNKLEVSQDSFGTIISLKRKNAVALTYYRNNILHLFALPGLVSAIVFAHKGLARPQVISLVGQLYPLLQRELFIYMSHEEAMNYTDRLLSTMIDIGLLRAEDDTLCPPAATSKAFYSFWLLNRSIQETLQRYAAVLTILKKEQTIGRGRLEKQSREFAERLAALHGINSPEFFDKNVLSTFIHALKDNELINASSEGQLQHSDTSEALLASVEELISPEITQRLQQI.

Positions 308-313 match the HXXXXD motif motif; sequence CHRSHM.

Belongs to the GPAT/DAPAT family.

The protein localises to the cell inner membrane. It carries out the reaction sn-glycerol 3-phosphate + an acyl-CoA = a 1-acyl-sn-glycero-3-phosphate + CoA. Its pathway is phospholipid metabolism; CDP-diacylglycerol biosynthesis; CDP-diacylglycerol from sn-glycerol 3-phosphate: step 1/3. This is Glycerol-3-phosphate acyltransferase from Pseudoalteromonas atlantica (strain T6c / ATCC BAA-1087).